The following is a 477-amino-acid chain: Glycogen synthase (477 aa).

Lysine 15 contacts ADP-alpha-D-glucose.

This sequence belongs to the glycosyltransferase 1 family. Bacterial/plant glycogen synthase subfamily.

It carries out the reaction [(1-&gt;4)-alpha-D-glucosyl](n) + ADP-alpha-D-glucose = [(1-&gt;4)-alpha-D-glucosyl](n+1) + ADP + H(+). Its pathway is glycan biosynthesis; glycogen biosynthesis. In terms of biological role, synthesizes alpha-1,4-glucan chains using ADP-glucose. The sequence is that of Glycogen synthase from Streptococcus pneumoniae serotype 4 (strain ATCC BAA-334 / TIGR4).